A 406-amino-acid polypeptide reads, in one-letter code: Tryptophan synthase beta chain (406 aa).

At lysine 99 the chain carries N6-(pyridoxal phosphate)lysine.

Belongs to the TrpB family. As to quaternary structure, tetramer of two alpha and two beta chains. The cofactor is pyridoxal 5'-phosphate.

It carries out the reaction (1S,2R)-1-C-(indol-3-yl)glycerol 3-phosphate + L-serine = D-glyceraldehyde 3-phosphate + L-tryptophan + H2O. It functions in the pathway amino-acid biosynthesis; L-tryptophan biosynthesis; L-tryptophan from chorismate: step 5/5. In terms of biological role, the beta subunit is responsible for the synthesis of L-tryptophan from indole and L-serine. Essential for production of nod factors and establishment of symbiosis. This Rhizobium etli (strain ATCC 51251 / DSM 11541 / JCM 21823 / NBRC 15573 / CFN 42) protein is Tryptophan synthase beta chain.